The following is a 116-amino-acid chain: T cell receptor alpha variable 38-2/delta variable 8 (116 aa).

The signal sequence occupies residues Met1–Ala21. The region spanning Gln22–Ser116 is the Ig-like domain. Cys43 and Cys112 are oxidised to a cystine. The N-linked (GlcNAc...) asparagine glycan is linked to Asn78.

Alpha-beta TR is a heterodimer composed of an alpha and beta chain; disulfide-linked. The alpha-beta TR is associated with the transmembrane signaling CD3 coreceptor proteins to form the TR-CD3 (TcR or TCR). The assembly of alpha-beta TR heterodimers with CD3 occurs in the endoplasmic reticulum where a single alpha-beta TR heterodimer associates with one CD3D-CD3E heterodimer, one CD3G-CD3E heterodimer and one CD247 homodimer forming a stable octameric structure. CD3D-CD3E and CD3G-CD3E heterodimers preferentially associate with TR alpha and TR beta chains, respectively. The association of the CD247 homodimer is the last step of TcR assembly in the endoplasmic reticulum and is required for transport to the cell surface.

Its subcellular location is the cell membrane. Its function is as follows. V region of the variable domain of T cell receptor (TR) alpha chain that participates in the antigen recognition. Alpha-beta T cell receptors are antigen specific receptors which are essential to the immune response and are present on the cell surface of T lymphocytes. Recognize peptide-major histocompatibility (MH) (pMH) complexes that are displayed by antigen presenting cells (APC), a prerequisite for efficient T cell adaptive immunity against pathogens. Binding of alpha-beta TR to pMH complex initiates TR-CD3 clustering on the cell surface and intracellular activation of LCK that phosphorylates the ITAM motifs of CD3G, CD3D, CD3E and CD247 enabling the recruitment of ZAP70. In turn ZAP70 phosphorylates LAT, which recruits numerous signaling molecules to form the LAT signalosome. The LAT signalosome propagates signal branching to three major signaling pathways, the calcium, the mitogen-activated protein kinase (MAPK) kinase and the nuclear factor NF-kappa-B (NF-kB) pathways, leading to the mobilization of transcription factors that are critical for gene expression and essential for T cell growth and differentiation. The T cell repertoire is generated in the thymus, by V-(D)-J rearrangement. This repertoire is then shaped by intrathymic selection events to generate a peripheral T cell pool of self-MH restricted, non-autoaggressive T cells. Post-thymic interaction of alpha-beta TR with the pMH complexes shapes TR structural and functional avidity. This chain is T cell receptor alpha variable 38-2/delta variable 8, found in Homo sapiens (Human).